A 574-amino-acid polypeptide reads, in one-letter code: Sulfate adenylyltransferase (574 aa).

The interval 1-169 (MANSPHGGVL…IEAVNKLNHY (169 aa)) is N-terminal. A catalytic region spans residues 170 to 394 (DYVALRYSPA…LRESSPPRAT (225 aa)). Residue glutamine 197 participates in sulfate binding. ATP-binding positions include 197–200 (QTRN) and 291–294 (GRDH). Active-site residues include threonine 198, arginine 199, and asparagine 200. Residue arginine 199 coordinates sulfate. Sulfate is bound at residue alanine 295. Valine 333 is an ATP binding site. The tract at residues 395 to 574 (QGFTIFLTGY…LESEGYFDRL (180 aa)) is allosteric regulation domain; adenylyl-sulfate kinase-like. Residues 434–437 (DTVR), arginine 451, 477–478 (IA), and arginine 516 contribute to the 3'-phosphoadenylyl sulfate site.

In the N-terminal section; belongs to the sulfate adenylyltransferase family. The protein in the C-terminal section; belongs to the APS kinase family. As to quaternary structure, homohexamer. Dimer of trimers.

Its subcellular location is the cytoplasm. The enzyme catalyses sulfate + ATP + H(+) = adenosine 5'-phosphosulfate + diphosphate. The protein operates within sulfur metabolism; hydrogen sulfide biosynthesis; sulfite from sulfate: step 1/3. With respect to regulation, allosterically inhibited by 3'-phosphoadenosine 5'-phosphosulfate (PAPS). Its function is as follows. Catalyzes the first intracellular reaction of sulfate assimilation, forming adenosine-5'-phosphosulfate (APS) from inorganic sulfate and ATP. Plays an important role in sulfate activation as a component of the biosynthesis pathway of sulfur-containing amino acids. This Aspergillus terreus (strain NIH 2624 / FGSC A1156) protein is Sulfate adenylyltransferase.